The chain runs to 209 residues: NAD(P)H dehydrogenase (quinone) (209 aa).

Positions 4 to 199 (VNIIFYSMYG…AMARYQGRHV (196 aa)) constitute a Flavodoxin-like domain. FMN-binding positions include 10–15 (SMYGHV) and 87–89 (TRY). Position 12 (Tyr12) interacts with NAD(+). Substrate is bound at residue Trp107. Residues 122-128 (SSGTQHG) and His143 each bind FMN.

It belongs to the WrbA family. FMN is required as a cofactor.

The catalysed reaction is a quinone + NADH + H(+) = a quinol + NAD(+). It catalyses the reaction a quinone + NADPH + H(+) = a quinol + NADP(+). This Methanosarcina acetivorans (strain ATCC 35395 / DSM 2834 / JCM 12185 / C2A) protein is NAD(P)H dehydrogenase (quinone).